Consider the following 159-residue polypeptide: Ribosomal RNA large subunit methyltransferase H (159 aa).

Residues L76, G108, and 127-132 (FSKMTF) contribute to the S-adenosyl-L-methionine site.

This sequence belongs to the RNA methyltransferase RlmH family. As to quaternary structure, homodimer.

Its subcellular location is the cytoplasm. The catalysed reaction is pseudouridine(1915) in 23S rRNA + S-adenosyl-L-methionine = N(3)-methylpseudouridine(1915) in 23S rRNA + S-adenosyl-L-homocysteine + H(+). Functionally, specifically methylates the pseudouridine at position 1915 (m3Psi1915) in 23S rRNA. The sequence is that of Ribosomal RNA large subunit methyltransferase H from Clostridium botulinum (strain Okra / Type B1).